The primary structure comprises 93 residues: Large ribosomal subunit protein bL27 (93 aa).

Residues 1–8 (MIMDLQFF) constitute a propeptide that is removed on maturation. The segment at 8-29 (FSHHKGGGSTANGRNSAGRRLG) is disordered.

It belongs to the bacterial ribosomal protein bL27 family. In terms of processing, the N-terminus is cleaved by ribosomal processing cysteine protease Prp.

In Limosilactobacillus reuteri (strain DSM 20016) (Lactobacillus reuteri), this protein is Large ribosomal subunit protein bL27.